Here is a 657-residue protein sequence, read N- to C-terminus: Trifunctional protein RibF/MnmA (657 aa).

An FMN adenylyltransferase region spans residues 1–141; sequence MLSIINLTSK…VVKKDHCSTS (141 aa). Positions 158–282 are riboflavin kinase; it reads LLLTPFYLKG…DKKAALSFFH (125 aa). The interval 283-657 is tRNA-specific 2-thiouridylase MnmA; sequence KQEKPKVVVA…GGGKITKIIK (375 aa). Residues 292–299 and M318 each bind ATP; that span reads ALSGGVDS. The interaction with target base in tRNA stretch occupies residues 389 to 391; that stretch reads NPD. Residue C394 is the Nucleophile of the active site. A disulfide bridge links C394 with C492. G420 provides a ligand contact to ATP. The segment at 442–444 is interaction with tRNA; the sequence is KDQ. The active-site Cysteine persulfide intermediate is C492.

This sequence in the N-terminal section; belongs to the RibF family. In the C-terminal section; belongs to the MnmA/TRMU family.

Its subcellular location is the cytoplasm. The enzyme catalyses riboflavin + ATP = FMN + ADP + H(+). The catalysed reaction is FMN + ATP + H(+) = FAD + diphosphate. It catalyses the reaction S-sulfanyl-L-cysteinyl-[protein] + uridine(34) in tRNA + AH2 + ATP = 2-thiouridine(34) in tRNA + L-cysteinyl-[protein] + A + AMP + diphosphate + H(+). The protein operates within cofactor biosynthesis; FAD biosynthesis; FAD from FMN: step 1/1. It participates in cofactor biosynthesis; FMN biosynthesis; FMN from riboflavin (ATP route): step 1/1. Its function is as follows. Involved in FAD and FMN biosynthesis. Functionally, catalyzes the 2-thiolation of uridine at the wobble position (U34) of tRNA, leading to the formation of s(2)U34. The chain is Trifunctional protein RibF/MnmA (ribF/mnmA) from Mycoplasmoides gallisepticum (strain R(low / passage 15 / clone 2)) (Mycoplasma gallisepticum).